Reading from the N-terminus, the 536-residue chain is MKTENLIVTTVKVEPLNYASQSFGDNNIYGGATKKQRLESDEWMNHNQTNMNLESSNMNHNTISGFSSPDVNYEAYSPNSKLDDGNMSVHMGDGLDGKKSSSKKGPVPRQQEELCLVCGDRASGYHYNALTCEGCKGFFRRSVTKNAVYCCKFGHECEMDMYMRRKCQECRLKKCLAVGMRPECVVPENQCAIKRKEKKAQKEKDKVPGIVGSNTSSSSLLNQSLNNGSLKNLEISYREELLEQLMKCDPPPHPMQQLLPEKLLMENRAKGTPQLTANQVAVIYKLIWYQDGYEQPSEEDLKRITTELEEEEDQEHEANFRYITEVTILTVQLIVEFAKGLPAFIKIPQEDQITLLKACSSEVMMLRMARRYDHDSDSILFANNTAYTKQTYQLAGMEETIDDLLHFCRQMYALSIDNVEYALLTAIVIFSDRPGLEKAEMVDIIQSYYTETLKVYIVNRHGGESRCSVQFAKLLGILTELRTMGNKNSEMCFSLKLRNRKLPRFLEEVWDVGDVNNQTTATTNTENIVRERINRN.

The tract at residues 1–114 (MKTENLIVTT…GPVPRQQEEL (114 aa)) is modulating. Residues 77 to 107 (SPNSKLDDGNMSVHMGDGLDGKKSSSKKGPV) are disordered. 2 NR C4-type zinc fingers span residues 115 to 135 (CLVCGDRASGYHYNALTCEGC) and 151 to 175 (CKFGHECEMDMYMRRKCQECRLKKC). Positions 115–187 (CLVCGDRASG…VGMRPECVVP (73 aa)) form a DNA-binding region, nuclear receptor. The NR LBD domain maps to 278 to 514 (NQVAVIYKLI…FLEEVWDVGD (237 aa)).

Belongs to the nuclear hormone receptor family. NR1 subfamily.

It localises to the nucleus. Functionally, receptor for ecdysone. Binds to ecdysone response elements (ECRES). The chain is Ecdysone receptor (EcR) from Chironomus tentans (Midge).